We begin with the raw amino-acid sequence, 317 residues long: Petrobactin-binding protein YclQ (317 aa).

The N-terminal stretch at 1 to 19 (MKKFALLFIALVTAVVISA) is a signal peptide. Residue Cys20 is the site of N-palmitoyl cysteine attachment. Cys20 carries the S-diacylglycerol cysteine lipid modification. Residues 56 to 317 (KVVVFDFGSL…IKEVKDGLEK (262 aa)) enclose the Fe/B12 periplasmic-binding domain.

It belongs to the bacterial solute-binding protein 8 family. As to quaternary structure, the complex is composed of two ATP-binding proteins (YclP), two transmembrane proteins (YclN and YclO) and a solute-binding protein (YclQ). Interacts with FloT.

Its subcellular location is the cell membrane. It localises to the membrane raft. In terms of biological role, part of the ABC transporter complex YclNOPQ involved in uptake of ferric-petrobactin. Petrobactin is a photoreactive 3,4-catecholate siderophore produced by many members of the B.cereus group, including B.anthracis. Binds selectively iron-free and ferric petrobactin and the petrobactin precursor 3,4-dihydroxybenzoic acid (3,4-DHB). This is Petrobactin-binding protein YclQ (yclQ) from Bacillus subtilis (strain 168).